We begin with the raw amino-acid sequence, 622 residues long: Leucine-rich repeat-containing protein 70 (622 aa).

A signal peptide spans 1–31; sequence MCGLQFSLPCLRLFLVVTCYLLLLLHKEILG. The 29-residue stretch at 32-60 folds into the LRRNT domain; it reads CSSVCQLCTGRQINCRNLGLSSIPKNFPE. 12 LRR repeats span residues 61 to 82, 85 to 106, 109 to 130, 133 to 154, 157 to 178, 181 to 202, 205 to 226, 229 to 250, 253 to 274, 277 to 298, 301 to 322, and 326 to 347; these read STVF…ELTG, SLVA…AFVQ, HLYF…IFKG, NLRN…VFND, SVQY…TFVG, ALRI…GFQH, NLAC…AFEV, SLRR…AFKG, NLEY…GFSG, NLKH…TFSL, NLIY…TFEN, and SLKI…VLKP. Residue asparagine 215 is glycosylated (N-linked (GlcNAc...) asparagine). An N-linked (GlcNAc...) asparagine glycan is attached at asparagine 266. N-linked (GlcNAc...) asparagine glycans are attached at residues asparagine 331 and asparagine 400. Residues 359–406 enclose the LRRCT domain; that stretch reads NPWECNCKLLGLRDWLASSAITLNIYCQNPPSMRGRALRYINITNCVT. The helical transmembrane segment at 527–547 threads the bilayer; it reads AFDILLAFFILACVLIIFLIY.

In terms of tissue distribution, expressed at low levels in many tissues, including smooth muscle, brain, uterus, pancreas, cartilage, adipose, spleen and testis.

The protein resides in the membrane. Functionally, renders cells highly sensitive to the activation by cytokines and lipopolysaccharide (LPS). The chain is Leucine-rich repeat-containing protein 70 (LRRC70) from Homo sapiens (Human).